The following is a 462-amino-acid chain: MLDDTIAALATPPGEGGISIIRLSGSQAIAIVAKVFKPVKGPDLTTTRSHTLRLGFIIDPVSGESLDEVLVSVMRAPHSYTAEDVVEINCHGGALATSRVLQLVLRTGARLAEPGEFTRRAFLNGRLDLAQAEAVLEIIRARSSRGLTAALDHLRGNLSRKIGELNERLTGILAALEASMDFPEEVGEVDPENLADLRRILAGVDRLLATWEEGRLLTEGLKVAIVGRPNVGKSSLLNALLNQERAIVSNIPGTTRDTIEETLQLGGFTCRLIDTAGLRETADELESIGVARSKKAIAAADLVLVVVDLQTGIQDEDRRVLESVRDKVLIIIGNKLDLVAHDINKKLADLESFAGNYPRVAVSALKGKGLDELARKVQEIVLGGRALAGSDEPLITNARHRAALENCREHLASAIKAWEEGLPEDLIAIDLWSAADYLGEIIGTTAREDLLDRIFSDFCIGK.

The (6S)-5-formyl-5,6,7,8-tetrahydrofolate site is built by Arg22, Glu87, and Arg126. Residues 220 to 382 (GLKVAIVGRP…LARKVQEIVL (163 aa)) form the TrmE-type G domain. Asn230 is a K(+) binding site. Residues 230 to 235 (NVGKSS), 249 to 255 (SNIPGTT), and 274 to 277 (DTAG) contribute to the GTP site. Residue Ser234 coordinates Mg(2+). Positions 249, 251, and 254 each coordinate K(+). A Mg(2+)-binding site is contributed by Thr255. Lys462 is a binding site for (6S)-5-formyl-5,6,7,8-tetrahydrofolate.

This sequence belongs to the TRAFAC class TrmE-Era-EngA-EngB-Septin-like GTPase superfamily. TrmE GTPase family. As to quaternary structure, homodimer. Heterotetramer of two MnmE and two MnmG subunits. K(+) is required as a cofactor.

The protein localises to the cytoplasm. Exhibits a very high intrinsic GTPase hydrolysis rate. Involved in the addition of a carboxymethylaminomethyl (cmnm) group at the wobble position (U34) of certain tRNAs, forming tRNA-cmnm(5)s(2)U34. This is tRNA modification GTPase MnmE from Moorella thermoacetica (strain ATCC 39073 / JCM 9320).